A 153-amino-acid chain; its full sequence is 6,7-dimethyl-8-ribityllumazine synthase (153 aa).

5-amino-6-(D-ribitylamino)uracil-binding positions include F22, 56 to 58 (AFE), and 80 to 82 (TVI). Residue 85–86 (AT) participates in (2S)-2-hydroxy-3-oxobutyl phosphate binding. H88 acts as the Proton donor in catalysis. 5-amino-6-(D-ribitylamino)uracil is bound at residue F113. R127 serves as a coordination point for (2S)-2-hydroxy-3-oxobutyl phosphate.

Belongs to the DMRL synthase family.

The enzyme catalyses (2S)-2-hydroxy-3-oxobutyl phosphate + 5-amino-6-(D-ribitylamino)uracil = 6,7-dimethyl-8-(1-D-ribityl)lumazine + phosphate + 2 H2O + H(+). It functions in the pathway cofactor biosynthesis; riboflavin biosynthesis; riboflavin from 2-hydroxy-3-oxobutyl phosphate and 5-amino-6-(D-ribitylamino)uracil: step 1/2. In terms of biological role, catalyzes the formation of 6,7-dimethyl-8-ribityllumazine by condensation of 5-amino-6-(D-ribitylamino)uracil with 3,4-dihydroxy-2-butanone 4-phosphate. This is the penultimate step in the biosynthesis of riboflavin. The sequence is that of 6,7-dimethyl-8-ribityllumazine synthase from Clostridium perfringens (strain ATCC 13124 / DSM 756 / JCM 1290 / NCIMB 6125 / NCTC 8237 / Type A).